The chain runs to 309 residues: Protein FdhE (309 aa).

The protein belongs to the FdhE family.

It is found in the cytoplasm. In terms of biological role, necessary for formate dehydrogenase activity. The protein is Protein FdhE of Escherichia coli O45:K1 (strain S88 / ExPEC).